The following is a 167-amino-acid chain: Translationally-controlled tumor protein homolog (167 aa).

A TCTP domain is found at methionine 1–isoleucine 167. 2 positions are modified to phosphoserine: serine 9 and serine 15.

This sequence belongs to the TCTP family. In terms of assembly, interacts with the 40S and 60S ribosomal subunits. Interacts with microtubules.

The protein resides in the cytoplasm. Its subcellular location is the cytoskeleton. It localises to the mitochondrion. Functionally, involved in protein synthesis. Involved in microtubule stabilization. This is Translationally-controlled tumor protein homolog (TMA19) from Saccharomyces cerevisiae (strain ATCC 204508 / S288c) (Baker's yeast).